Consider the following 390-residue polypeptide: Fer-related kinase 1 (390 aa).

Residues 23 to 119 (YYHGMVPRQD…ASGAKIRRPM (97 aa)) enclose the SH2 domain. In terms of domain architecture, Protein kinase spans 131–386 (IVANKKLGEG…SIHKKLREFY (256 aa)). ATP-binding positions include 137–145 (LGEGAFGDV) and lysine 161. Aspartate 252 (proton acceptor) is an active-site residue.

Belongs to the protein kinase superfamily. Tyr protein kinase family. Fes/fps subfamily. As to quaternary structure, interacts with hmp-2. The cofactor is Mn(2+).

The protein localises to the nucleus. It localises to the cytoplasm. Its subcellular location is the cell junction. It is found in the cell membrane. It carries out the reaction L-tyrosyl-[protein] + ATP = O-phospho-L-tyrosyl-[protein] + ADP + H(+). In terms of biological role, non-receptor tyrosine-protein kinase which plays a role in morphogenesis by regulating the epidermal enclosure of the embryo, independently of its kinase activity. Prevents hyperactivation of the Wnt signaling pathway during endoderm development, probably by preventing hmp-2 nuclear translocation. This Caenorhabditis elegans protein is Fer-related kinase 1.